We begin with the raw amino-acid sequence, 801 residues long: MSTEPTIHDSIDTAATTVGSLWPIHSFVTANPLAGFEDQPFSEAVTQAADLLGGRGYPSTRTFRAALQRGQIDPEILDAELSEAGYEKEPEILLDRMAEATDAADSDSDTATDHVDQVLTKWLSAFLDEGSAHWSMPNREAGFYAAFRGVAEHDSEIPDAGIIAELPESPIETIETVLASHPENQWVPIFEEQLAALPGWTGLIKQRADDEGAWQSTYPISLVGYLAARLALLDAVGAALAPSNDSIDPDPAAELAGAFLRAWEASYRGDLVETVAAESQSLADSDSSGRPDAQMVFCIDTRSEIIRRHIEATGDYETHGYAGFFGIPMEYQGYDTDVSVDACPPILDPQHHVTDVPIDDDTQESHDRWSGIRDTADEIIETLEANAATAYGFVETAGSGYGLALAARTLVPGRVQDLFDAAGRSVPDDHEFCDPLVHHQHTYTGDLPVGLTTDEKVEYAATAFDLMGWEAFSRLVVFTGHASETTNNPYDSSLDCGACAGNPGGPNARVLATICNDTEVQSALRDRGFEIPEDTVFMAGEHNTTTDEVELYDSEVPESHADDLKQLRANLATARENAAAERAESMGSDASSGVSETQRRAADWAETRPEWGLAGNAGFVIGPRELTSDVDLDGRAFLHSYDWSTDPDGEALEAILTGPMVVTQWINTQYYFSTVDNAVYGSGSKVTHNPVGNVGVYQGNGGDLMTGLPLQSLMAADDDPHHQPLRLSTVIHAPVDRVTDVLADHAELATLLDNNWLSLTVVDPTQDHHAFEYERDLEWSTVSEVSEADPAEPTATAVADD.

Residues Cys298, Asp300, His481, and Cys496 each contribute to the Zn(2+) site. The disordered stretch occupies residues 575 to 596 (RENAAAERAESMGSDASSGVSE).

It belongs to the inorganic carbon transporter (TC 9.A.2) DabA family. In terms of assembly, forms a complex with DabB. Zn(2+) is required as a cofactor.

The protein localises to the cell membrane. Its function is as follows. Part of an energy-coupled inorganic carbon pump. In Haloarcula marismortui (strain ATCC 43049 / DSM 3752 / JCM 8966 / VKM B-1809) (Halobacterium marismortui), this protein is Probable inorganic carbon transporter subunit DabA.